Consider the following 547-residue polypeptide: Chorismate synthase (547 aa).

Catalysis depends on residues H17, H104, and D500.

Belongs to the chorismate synthase family.

It is found in the cytoplasm. It localises to the cytosol. The enzyme catalyses 5-O-(1-carboxyvinyl)-3-phosphoshikimate = chorismate + phosphate. It carries out the reaction FMNH2 + NADP(+) = FMN + NADPH + 2 H(+). It participates in metabolic intermediate biosynthesis; chorismate biosynthesis; chorismate from D-erythrose 4-phosphate and phosphoenolpyruvate: step 7/7. Bifunctional chorismate synthase and flavin reductase. Catalyzes the conversion of 5-enolpyruvylshikimate 3-phosphate (EPSP) to form chorismate. Acts also as a flavin reductase (FR) able to generate reduced flavin mononucleotide in the presence of NADPH. This is Chorismate synthase from Plasmodium vivax (strain Salvador I).